Reading from the N-terminus, the 473-residue chain is Cell division protein FtsZ homolog 2-2, chloroplastic (473 aa).

GTP contacts are provided by residues 124 to 128, 213 to 215, E244, and R248; these read GGGSN and GTG. T282 is modified (phosphothreonine; by PGK1). D292 provides a ligand contact to GTP. The segment at 424–455 is disordered; the sequence is EEGEGRPLQATQADASMGATRRPSSSFTEGSS. Residues 445–454 are compositionally biased toward polar residues; the sequence is RPSSSFTEGS.

This sequence belongs to the FtsZ family. Aggregates to form a contractile ring-like structure; contraction of the ring was accompanied by an increase in the filament turnover rate. Self-interacts and binds to FTSZ1 in heteropolymers to form two morphologically distinct types of filaments, termed type-I (smooth filaments) and -II (rough filaments), in a GTP-dependent manner. Part of a complex made of ARC3, ARC6, FTSZ1 and FTSZ2. Interacts (via C-terminus) with ARC6. Interacts with CDP1/PARC6. Binds to PGK1. Phosphorylation at Thr-282 is required for the formation of contractile ring at the chloroplast midpoint.

The protein resides in the plastid. The protein localises to the chloroplast stroma. Its subcellular location is the chloroplast thylakoid membrane. Functionally, exhibits GTPase activity. Component of the plastid division machinery that forms a contractile ring at the division site. Contributes to plastid division in the vegetative shoot apex, at the shoot apical meristem (SAM) where the proplastid-to-chloroplast transition takes place. This Arabidopsis thaliana (Mouse-ear cress) protein is Cell division protein FtsZ homolog 2-2, chloroplastic.